Reading from the N-terminus, the 108-residue chain is Biogenesis of lysosome-related organelles complex 1 subunit CNL1 (108 aa).

It belongs to the BLOC1S4 family. As to quaternary structure, component of the biogenesis of lysosome-related organelles complex-1 (BLOC-1).

It is found in the cytoplasm. Functionally, component of the biogenesis of lysosome-related organelles complex-1 (BLOC-1), a complex that is involved in endosomal cargo sorting. The polypeptide is Biogenesis of lysosome-related organelles complex 1 subunit CNL1 (CLN1) (Zygosaccharomyces rouxii (strain ATCC 2623 / CBS 732 / NBRC 1130 / NCYC 568 / NRRL Y-229)).